Consider the following 332-residue polypeptide: Serpentine receptor class gamma-3 (332 aa).

The next 7 membrane-spanning stretches (helical) occupy residues 23-43 (FAYL…IWVS), 72-92 (LIFT…SEIV), 101-121 (IYYC…IFIA), 144-164 (IMLI…LISD), 184-204 (WASL…ITMV), 231-251 (AALI…FAFF), and 263-283 (YLRF…LLLV).

The protein belongs to the nematode receptor-like protein srg family.

It localises to the membrane. The polypeptide is Serpentine receptor class gamma-3 (srg-3) (Caenorhabditis elegans).